A 436-amino-acid chain; its full sequence is Alpha-galactosidase mel1 (436 aa).

The N-terminal stretch at 1 to 24 (MISISFLNCFFLVFLFLFFSDVHG) is a signal peptide. C45 and C77 are disulfide-bonded. N84 is a glycosylation site (N-linked (GlcNAc...) asparagine). Residues C126 and C156 are joined by a disulfide bond. D154 functions as the Nucleophile in the catalytic mechanism. A glycan (N-linked (GlcNAc...) asparagine) is linked at N180. The active-site Proton donor is D214.

This sequence belongs to the glycosyl hydrolase 27 family.

The protein resides in the endoplasmic reticulum lumen. It localises to the secreted. It catalyses the reaction Hydrolysis of terminal, non-reducing alpha-D-galactose residues in alpha-D-galactosides, including galactose oligosaccharides, galactomannans and galactolipids.. In terms of biological role, secreted alpha-galactosidase required for catabolic conversion of melibiose to glucose and galactose. The polypeptide is Alpha-galactosidase mel1 (mel1) (Schizosaccharomyces pombe (strain 972 / ATCC 24843) (Fission yeast)).